A 308-amino-acid polypeptide reads, in one-letter code: Glycine--tRNA ligase alpha subunit (308 aa).

The protein belongs to the class-II aminoacyl-tRNA synthetase family. In terms of assembly, tetramer of two alpha and two beta subunits.

Its subcellular location is the cytoplasm. It catalyses the reaction tRNA(Gly) + glycine + ATP = glycyl-tRNA(Gly) + AMP + diphosphate. This chain is Glycine--tRNA ligase alpha subunit, found in Brucella abortus (strain 2308).